The chain runs to 612 residues: uncharacterized protein (612 aa).

Residues 213 to 238 are disordered; the sequence is ASAEDGEEAAAGAGKRQVARSGARKR. Residues 421-610 form the VWFA domain; sequence DLACLLLADL…ERLLQLYRRL (190 aa).

It localises to the cytoplasm. In terms of biological role, component of the anaerobic respiratory chain that transforms nitrate to dinitrogen (denitrification). Function unknown, but essential for the denitrification process. This is an uncharacterized protein from Pseudomonas aeruginosa (strain ATCC 15692 / DSM 22644 / CIP 104116 / JCM 14847 / LMG 12228 / 1C / PRS 101 / PAO1).